We begin with the raw amino-acid sequence, 163 residues long: uncharacterized protein (163 aa).

It belongs to the LcrH/SycD chaperone family.

This is an uncharacterized protein from Escherichia coli (strain K12).